Consider the following 143-residue polypeptide: Large ribosomal subunit protein uL22c (143 aa).

The protein belongs to the universal ribosomal protein uL22 family. In terms of assembly, part of the 50S ribosomal subunit.

The protein resides in the plastid. It is found in the chloroplast. In terms of biological role, this protein binds specifically to 23S rRNA. Functionally, the globular domain of the protein is located near the polypeptide exit tunnel on the outside of the subunit, while an extended beta-hairpin is found that lines the wall of the exit tunnel in the center of the 70S ribosome. This is Large ribosomal subunit protein uL22c (rpl22) from Piper cenocladum (Ant piper).